A 260-amino-acid polypeptide reads, in one-letter code: 3'-5' ssDNA/RNA exonuclease TatD (260 aa).

A divalent metal cation-binding residues include glutamate 91, histidine 127, and histidine 152.

The protein belongs to the metallo-dependent hydrolases superfamily. TatD-type hydrolase family. TatD subfamily. In terms of assembly, monomer. Requires Mg(2+) as cofactor.

It localises to the cytoplasm. Functionally, 3'-5' exonuclease that prefers single-stranded DNA and RNA. May play a role in the H(2)O(2)-induced DNA damage repair. This Shigella flexneri serotype 5b (strain 8401) protein is 3'-5' ssDNA/RNA exonuclease TatD.